The sequence spans 226 residues: Peroxynitrite isomerase 2 (226 aa).

Residues 73–79 carry the GXWXGXG motif; sequence GVWRGEG. The heme b site is built by lysine 189 and histidine 216.

This sequence belongs to the nitrobindin family. Homodimer. Heme b serves as cofactor.

The enzyme catalyses peroxynitrite = nitrate. Its pathway is nitrogen metabolism. In terms of biological role, heme-binding protein able to scavenge peroxynitrite and to protect free L-tyrosine against peroxynitrite-mediated nitration, by acting as a peroxynitrite isomerase that converts peroxynitrite to nitrate. Therefore, this protein likely plays a role in peroxynitrite sensing and in the detoxification of reactive nitrogen and oxygen species (RNS and ROS, respectively). Is able to bind nitric oxide (NO) in vitro, but may act as a sensor of peroxynitrite levels in vivo. The polypeptide is Peroxynitrite isomerase 2 (Mycobacterium bovis (strain ATCC BAA-935 / AF2122/97)).